Reading from the N-terminus, the 114-residue chain is V-type proton ATPase subunit G (114 aa).

An N-acetylserine modification is found at Ser-2.

The protein belongs to the V-ATPase G subunit family. As to quaternary structure, V-ATPase is a heteromultimeric enzyme composed of a peripheral catalytic V1 complex (components A to H) attached to an integral membrane V0 proton pore complex (components: a, c, c', c'', d, e, f and VOA1).

It is found in the vacuole membrane. Subunit of the V1 complex of vacuolar(H+)-ATPase (V-ATPase), a multisubunit enzyme composed of a peripheral complex (V1) that hydrolyzes ATP and a membrane integral complex (V0) that translocates protons. V-ATPase is responsible for acidifying and maintaining the pH of intracellular compartments. The chain is V-type proton ATPase subunit G from Saccharomyces cerevisiae (strain ATCC 204508 / S288c) (Baker's yeast).